The sequence spans 275 residues: Holocytochrome c-type synthase (275 aa).

2 disordered regions span residues 1 to 59 (MGLS…KTNS) and 83 to 102 (KENLDPSNLMPPPNQTPAPD). A lipid anchor (N-myristoyl glycine) is attached at glycine 2. The segment covering 9–28 (AASTVQTSTPAASDHQTAAP) has biased composition (polar residues). HRM repeat units follow at residues 31 to 36 (GCPMHE) and 41 to 46 (GCPVSA). Positions 48 to 59 (PSDSTCGSKTNS) are enriched in polar residues. A compositionally biased stretch (pro residues) spans 91–102 (LMPPPNQTPAPD).

Belongs to the cytochrome c-type heme lyase family.

It is found in the mitochondrion inner membrane. Its subcellular location is the membrane. It catalyses the reaction holo-[cytochrome c] = apo-[cytochrome c] + heme b. Lyase that catalyzes the covalent linking of the heme group to the cytochrome C apoprotein to produce the mature functional cytochrome. The polypeptide is Holocytochrome c-type synthase (Bos taurus (Bovine)).